A 355-amino-acid chain; its full sequence is Homoserine O-succinyltransferase (355 aa).

The Acyl-thioester intermediate role is filled by Cys146. Substrate-binding residues include Lys167 and Ser196. The active-site Proton acceptor is the His239. Glu241 is an active-site residue. Residue Arg253 participates in substrate binding.

The protein belongs to the MetA family.

Its subcellular location is the cytoplasm. The catalysed reaction is L-homoserine + succinyl-CoA = O-succinyl-L-homoserine + CoA. It functions in the pathway amino-acid biosynthesis; L-methionine biosynthesis via de novo pathway; O-succinyl-L-homoserine from L-homoserine: step 1/1. In terms of biological role, transfers a succinyl group from succinyl-CoA to L-homoserine, forming succinyl-L-homoserine. The polypeptide is Homoserine O-succinyltransferase (Methylococcus capsulatus (strain ATCC 33009 / NCIMB 11132 / Bath)).